Here is a 381-residue protein sequence, read N- to C-terminus: Succinyl-diaminopimelate desuccinylase (381 aa).

Histidine 72 contributes to the Zn(2+) binding site. The active site involves aspartate 74. Aspartate 105 is a binding site for Zn(2+). Catalysis depends on glutamate 139, which acts as the Proton acceptor. Zn(2+) is bound by residues glutamate 140, glutamate 168, and histidine 354.

This sequence belongs to the peptidase M20A family. DapE subfamily. As to quaternary structure, homodimer. Zn(2+) is required as a cofactor. Requires Co(2+) as cofactor.

It carries out the reaction N-succinyl-(2S,6S)-2,6-diaminopimelate + H2O = (2S,6S)-2,6-diaminopimelate + succinate. It functions in the pathway amino-acid biosynthesis; L-lysine biosynthesis via DAP pathway; LL-2,6-diaminopimelate from (S)-tetrahydrodipicolinate (succinylase route): step 3/3. In terms of biological role, catalyzes the hydrolysis of N-succinyl-L,L-diaminopimelic acid (SDAP), forming succinate and LL-2,6-diaminopimelate (DAP), an intermediate involved in the bacterial biosynthesis of lysine and meso-diaminopimelic acid, an essential component of bacterial cell walls. This chain is Succinyl-diaminopimelate desuccinylase, found in Shewanella sp. (strain ANA-3).